Reading from the N-terminus, the 428-residue chain is Flotillin-2 (428 aa).

S-palmitoyl cysteine attachment occurs at residues Cys-4, Cys-19, and Cys-20.

It belongs to the band 7/mec-2 family. Flotillin subfamily. In terms of assembly, heterooligomeric complex of flotillins 1 and 2. In terms of processing, palmitoylation may be required for the formation of higher order complexes and for neurite outgrowth in cultured neural stem cells. Normally expressed in growing retinal exons of newly differentiated ganglion cells at the retinal margin. After optic nerve injury, expressed in all retinal ganglion cells and retinal axons. Also expressed in endothelial cells, spinal cord, larval and adult skin, muscle processes, thymus and gill macrophages.

Its subcellular location is the membrane. It is found in the endosome. Its function is as follows. May play a role in axon growth and regeneration. May be involved in epidermal cell adhesion and epidermal structure and function. This chain is Flotillin-2 (flot2), found in Carassius auratus (Goldfish).